We begin with the raw amino-acid sequence, 203 residues long: Pyridoxal 5'-phosphate synthase subunit PdxT (203 aa).

54-56 (GES) serves as a coordination point for L-glutamine. The active-site Nucleophile is the Cys-86. L-glutamine is bound by residues Arg-113 and 141 to 142 (IR). Catalysis depends on charge relay system residues His-177 and Glu-179.

The protein belongs to the glutaminase PdxT/SNO family. In the presence of PdxS, forms a dodecamer of heterodimers. Only shows activity in the heterodimer.

The enzyme catalyses aldehydo-D-ribose 5-phosphate + D-glyceraldehyde 3-phosphate + L-glutamine = pyridoxal 5'-phosphate + L-glutamate + phosphate + 3 H2O + H(+). The catalysed reaction is L-glutamine + H2O = L-glutamate + NH4(+). It functions in the pathway cofactor biosynthesis; pyridoxal 5'-phosphate biosynthesis. Catalyzes the hydrolysis of glutamine to glutamate and ammonia as part of the biosynthesis of pyridoxal 5'-phosphate. The resulting ammonia molecule is channeled to the active site of PdxS. In Halobacterium salinarum (strain ATCC 29341 / DSM 671 / R1), this protein is Pyridoxal 5'-phosphate synthase subunit PdxT.